We begin with the raw amino-acid sequence, 616 residues long: Membrane protein insertase YidC (616 aa).

The chain crosses the membrane as a helical span at residues 8–28; sequence MFVAIALSLVVLLGWHYFVTG. Positions 33–85 are disordered; the sequence is RQRQAAQSQTAQTGAPQTADGIPSPSPREGGPNAPAPGTLPGAAAQGPVSRED. 2 stretches are compositionally biased toward low complexity: residues 36–51 and 62–80; these read QAAQ…PQTA and GGPN…AQGP. A run of 4 helical transmembrane segments spans residues 386-406, 460-480, 516-536, and 551-571; these read LLGN…LFFL, WPVL…FITI, YIPI…FIQM, and FAFM…GLVI.

This sequence belongs to the OXA1/ALB3/YidC family. Type 1 subfamily. Interacts with the Sec translocase complex via SecD. Specifically interacts with transmembrane segments of nascent integral membrane proteins during membrane integration.

It is found in the cell inner membrane. Required for the insertion and/or proper folding and/or complex formation of integral membrane proteins into the membrane. Involved in integration of membrane proteins that insert both dependently and independently of the Sec translocase complex, as well as at least some lipoproteins. Aids folding of multispanning membrane proteins. This is Membrane protein insertase YidC from Methylorubrum extorquens (strain PA1) (Methylobacterium extorquens).